The chain runs to 355 residues: Anthranilate phosphoribosyltransferase (355 aa).

Residues Gly102, 105 to 106, Ser110, 112 to 115, 130 to 138, and Ser142 contribute to the 5-phospho-alpha-D-ribose 1-diphosphate site; these read GD, NIST, and KHGNRSVSS. An anthranilate-binding site is contributed by Gly102. Residue Ser114 coordinates Mg(2+). Residue Asn133 participates in anthranilate binding. An anthranilate-binding site is contributed by Arg188. Mg(2+)-binding residues include Asp246 and Glu247.

Belongs to the anthranilate phosphoribosyltransferase family. Homodimer. Requires Mg(2+) as cofactor.

The enzyme catalyses N-(5-phospho-beta-D-ribosyl)anthranilate + diphosphate = 5-phospho-alpha-D-ribose 1-diphosphate + anthranilate. It participates in amino-acid biosynthesis; L-tryptophan biosynthesis; L-tryptophan from chorismate: step 2/5. In terms of biological role, catalyzes the transfer of the phosphoribosyl group of 5-phosphorylribose-1-pyrophosphate (PRPP) to anthranilate to yield N-(5'-phosphoribosyl)-anthranilate (PRA). The polypeptide is Anthranilate phosphoribosyltransferase (Pectobacterium carotovorum subsp. carotovorum (strain PC1)).